The primary structure comprises 346 residues: MSAMTRVSEVIIGIVSAGVVSALVFPRYTGEQMRTTVRKRFGSFVDYVASALSGQLDRAHIETIHTRFAYVVGFEAARSMAVFEDPDTRMRSGRLARLNSEFMSASSRFHALHQLMNRLHAAGAQAAIDAIEPYFREIAPLLTRNGEPVRTSIDAAHSAEQLLAWRDALPRRIRATRAELETQPDFPLLDFDTAAELLYRFITDLQEYAATYASLATATHERERWIERYEPRTNKTAATIAGIRTATVILALGWFWIETAWPSGVMLVLNAAATCALASSAPRPTAMAAQMGMGTALAVCTGFLLTFGIYPRIDGFVLLCAALAPLLAIGIYMSLKPKLAGYGGAI.

The next 4 membrane-spanning stretches (helical) occupy residues 10-30 (VIIG…RYTG), 248-268 (VILA…VMLV), 291-311 (MGMG…GIYP), and 315-335 (GFVL…YMSL).

Belongs to the aromatic acid exporter ArAE (TC 2.A.85) family.

It localises to the cell membrane. Its function is as follows. Involved in the resistance (detoxification) of the fungal toxin fusaric acid. This is Fusaric acid resistance protein FusC (fusC) from Burkholderia cepacia (Pseudomonas cepacia).